Here is a 526-residue protein sequence, read N- to C-terminus: Bifunctional purine biosynthesis protein PurH (526 aa).

One can recognise an MGS-like domain in the interval 1–145 (MSKAPLALLS…KNHAHVGIVT (145 aa)).

This sequence belongs to the PurH family.

The catalysed reaction is (6R)-10-formyltetrahydrofolate + 5-amino-1-(5-phospho-beta-D-ribosyl)imidazole-4-carboxamide = 5-formamido-1-(5-phospho-D-ribosyl)imidazole-4-carboxamide + (6S)-5,6,7,8-tetrahydrofolate. It catalyses the reaction IMP + H2O = 5-formamido-1-(5-phospho-D-ribosyl)imidazole-4-carboxamide. Its pathway is purine metabolism; IMP biosynthesis via de novo pathway; 5-formamido-1-(5-phospho-D-ribosyl)imidazole-4-carboxamide from 5-amino-1-(5-phospho-D-ribosyl)imidazole-4-carboxamide (10-formyl THF route): step 1/1. It participates in purine metabolism; IMP biosynthesis via de novo pathway; IMP from 5-formamido-1-(5-phospho-D-ribosyl)imidazole-4-carboxamide: step 1/1. This Psychrobacter arcticus (strain DSM 17307 / VKM B-2377 / 273-4) protein is Bifunctional purine biosynthesis protein PurH.